The primary structure comprises 281 residues: MPTYDNHHALKGLTLGQPTEYHDTYQPALLQAVPRRLNREPLGLYPDSLPFGGADIWTLYELSWLNSKGVPQVAVGEVVLDASSINLIESKSFKLYLNSFNQTKFANWGEVRQILERDLSACAAGKVSVALFRLHEIEGQPVGHFDGYCIDEQDIVIDSYAFDAGYLHNAVGNEIVEEQLVSHLLKSNCLITNQPDWGTVQISYRGPRIQREALLRYLVSFRQHNEFHEQCVERIFSDILRYCQPESLSVYARYTRRGGLDINPWRSNTHFTPGRSRLVRQ.

A substrate-binding site is contributed by 88–90; that stretch reads IES. 90 to 91 contacts NADPH; that stretch reads SK. Cys-189 (thioimide intermediate) is an active-site residue. Asp-196 serves as the catalytic Proton donor. 228–229 contacts substrate; that stretch reads HE. 257-258 is a binding site for NADPH; the sequence is RG.

It belongs to the GTP cyclohydrolase I family. QueF type 2 subfamily. In terms of assembly, homodimer.

It localises to the cytoplasm. It carries out the reaction 7-aminomethyl-7-carbaguanine + 2 NADP(+) = 7-cyano-7-deazaguanine + 2 NADPH + 3 H(+). It participates in tRNA modification; tRNA-queuosine biosynthesis. Functionally, catalyzes the NADPH-dependent reduction of 7-cyano-7-deazaguanine (preQ0) to 7-aminomethyl-7-deazaguanine (preQ1). The protein is NADPH-dependent 7-cyano-7-deazaguanine reductase of Erwinia tasmaniensis (strain DSM 17950 / CFBP 7177 / CIP 109463 / NCPPB 4357 / Et1/99).